A 275-amino-acid chain; its full sequence is NH(3)-dependent NAD(+) synthetase (275 aa).

46 to 53 (GISGGQDS) is a binding site for ATP. D52 is a Mg(2+) binding site. Residue R140 coordinates deamido-NAD(+). T160 contributes to the ATP binding site. E165 contributes to the Mg(2+) binding site. The deamido-NAD(+) site is built by K173 and D180. ATP is bound by residues K189 and T211. 260–261 (HK) contacts deamido-NAD(+).

This sequence belongs to the NAD synthetase family. Homodimer.

The catalysed reaction is deamido-NAD(+) + NH4(+) + ATP = AMP + diphosphate + NAD(+) + H(+). It functions in the pathway cofactor biosynthesis; NAD(+) biosynthesis; NAD(+) from deamido-NAD(+) (ammonia route): step 1/1. Catalyzes the ATP-dependent amidation of deamido-NAD to form NAD. Uses ammonia as a nitrogen source. This is NH(3)-dependent NAD(+) synthetase from Salmonella heidelberg (strain SL476).